Reading from the N-terminus, the 473-residue chain is Trigger factor (473 aa).

The region spanning 171–256 (GDRVTIDFVG…VTKIQAAGEA (86 aa)) is the PPIase FKBP-type domain. Positions 439–473 (KEALFADEDGDDTTGGKPADKAEAKDESKTEAKAD) are disordered. Basic and acidic residues predominate over residues 456 to 473 (PADKAEAKDESKTEAKAD).

The protein belongs to the FKBP-type PPIase family. Tig subfamily.

It is found in the cytoplasm. The catalysed reaction is [protein]-peptidylproline (omega=180) = [protein]-peptidylproline (omega=0). In terms of biological role, involved in protein export. Acts as a chaperone by maintaining the newly synthesized protein in an open conformation. Functions as a peptidyl-prolyl cis-trans isomerase. This Methylobacterium radiotolerans (strain ATCC 27329 / DSM 1819 / JCM 2831 / NBRC 15690 / NCIMB 10815 / 0-1) protein is Trigger factor.